The sequence spans 116 residues: Non-specific lipid transfer protein GPI-anchored 17 (116 aa).

Positions 1 to 24 (MKIGVVLVLLTVFVVVMSSTSVSA) are cleaved as a signal peptide. Disulfide bonds link C31–C74, C42–C58, and C59–C99. N107 is lipidated: GPI-anchor amidated asparagine. Positions 108–116 (GKNFKNTSL) are cleaved as a propeptide — removed in mature form. The N-linked (GlcNAc...) asparagine glycan is linked to N113.

This sequence belongs to the plant LTP family. As to expression, expressed in seedlings, preferentially in roots.

Its subcellular location is the cell membrane. Functionally, probable lipid transfer protein. This Arabidopsis thaliana (Mouse-ear cress) protein is Non-specific lipid transfer protein GPI-anchored 17.